A 337-amino-acid polypeptide reads, in one-letter code: Putative long-chain-alcohol O-fatty-acyltransferase 10 (337 aa).

8 helical membrane passes run 7-27 (SFVKVWGSAIISVSYCYYIPS), 38-58 (SVLPVCVLFLVLPLFFVFTIF), 59-79 (SSTTAFCLSILANFKLILFAF), 82-102 (GPLLPLPTNLFRFICFTCLPI), 142-162 (ILLLGLYPLHLYIVLDVLLTI), 228-248 (MGCMTTFFVSGLIHELVYFYI), 254-274 (TLEVTWFFVLHGVCTAMEIAV), and 285-305 (MLLRLITVGFLVVTGDLLFFG).

This sequence belongs to the wax synthase family.

It localises to the membrane. It catalyses the reaction a long chain fatty alcohol + a fatty acyl-CoA = a wax ester + CoA. In terms of biological role, catalyzes the final step in the synthesis of long-chain linear esters (waxes). This Arabidopsis thaliana (Mouse-ear cress) protein is Putative long-chain-alcohol O-fatty-acyltransferase 10.